The sequence spans 558 residues: MAQGSDIEIAREAKMQNIAEVGAKVGIPQDALLNYGPYKAKLSWDFINSVQGNQDGKLILVTAINPTPAGEGKTTTTVGLADGLNRIGKKTVAALREPSLGPCFGVKGGAAGGGYAQVVPMEDINLHFTGDFHAITSANNLLAALIDNHIYWGNKLGLDPRRIAWRRVLDMNDRALRSIVNSLGGVSNGYPREDGFDITVASEVMAILCLSSDLKDLERRLGNIHAGYTRERKAVLASELNASGAMTVLLKDALQPNMVQTLENNPVLIHGGPFANIAHGCNSVLATKTALKIADYVVTEAGFGADLGAEKFFDIKCRKAGLKPSAAVIVATIRALKMHGGVDKADLGTANPEAVRKGGVNLARHIENVRQFGVPVVVAINQFITDTDEEMAMVKEIAEAAGAEAVLCSHWANGSAGTEELARKVVLHAESGSSNFAPLYEDSMPLFEKIDTIAKRIYRATEATADSSVRNKLKGWEADGFGHLPVCMAKTQYSFSTDPALRGAPTDHVVPVRDVILSAGAEFIVAVCGDIMRMPGLPKVPSADFIKLDEQGQIQGLF.

An ATP-binding site is contributed by 67–74 (TPAGEGKT).

It belongs to the formate--tetrahydrofolate ligase family.

It carries out the reaction (6S)-5,6,7,8-tetrahydrofolate + formate + ATP = (6R)-10-formyltetrahydrofolate + ADP + phosphate. It functions in the pathway one-carbon metabolism; tetrahydrofolate interconversion. This Sphingobium sp. (strain NBRC 103272 / SYK-6) protein is Formate--tetrahydrofolate ligase.